The sequence spans 363 residues: Peptide chain release factor 1 (363 aa).

Gln237 carries the post-translational modification N5-methylglutamine. The segment covering 284–296 (EDEKRRSAEESTR) has biased composition (basic and acidic residues). The tract at residues 284–305 (EDEKRRSAEESTRRSLVASGDR) is disordered.

This sequence belongs to the prokaryotic/mitochondrial release factor family. In terms of processing, methylated by PrmC. Methylation increases the termination efficiency of RF1.

The protein resides in the cytoplasm. In terms of biological role, peptide chain release factor 1 directs the termination of translation in response to the peptide chain termination codons UAG and UAA. This chain is Peptide chain release factor 1, found in Shewanella baltica (strain OS195).